The primary structure comprises 471 residues: MPAPTNTLLIEGTFTELADEFAQYIDALRKNEGSSLQSEISSLLEPLRQQEQSEEEPDRKQRDEVLKKLVAAAAVLNAAPEKEIISAYNLLVHLVHQASNPDMFLSRICTYLAKPITTSPQFGPTLAISILTTIFNTLTSSDSSRYHVLLAIVAVIRQSGSSYAFEALKPQLTAQLPTWLAAWELDEEEAQKLHLAVADAAQASGDFELAQSHVVQALQTIPANESSSKEARDLAVRALASALKSPAVFDFTSLTAADAIQALRTSDSSLFELLEIFTADTLDAYEDFVAATPLASISGGVLADAGEALQNKLRLLTLASIAASAPSRSLPYATIASALRVPTEDVEKWVIDTIRAGLVEGKLSQLRSEFLVHRATYRVFGEKQWAEVQGRLMVWRRSLENVLGVVRAERERFIRESLQAATEEANQGKSGEKGGKGGDRRRNPQHQQQQQQSQPSQPQQPRETELVAGAE.

Residues 39–61 are disordered; the sequence is EISSLLEPLRQQEQSEEEPDRKQ. One can recognise a PCI domain in the interval 206–377; the sequence is DFELAQSHVV…SEFLVHRATY (172 aa). Positions 419–471 are disordered; sequence QAATEEANQGKSGEKGGKGGDRRRNPQHQQQQQQSQPSQPQQPRETELVAGAE. The segment covering 430–442 has biased composition (basic and acidic residues); the sequence is SGEKGGKGGDRRR. The span at 445 to 461 shows a compositional bias: low complexity; that stretch reads QHQQQQQQSQPSQPQQP.

Belongs to the eIF-3 subunit M family. In terms of assembly, component of the eukaryotic translation initiation factor 3 (eIF-3) complex.

The protein resides in the cytoplasm. Component of the eukaryotic translation initiation factor 3 (eIF-3) complex, which is involved in protein synthesis of a specialized repertoire of mRNAs and, together with other initiation factors, stimulates binding of mRNA and methionyl-tRNAi to the 40S ribosome. The eIF-3 complex specifically targets and initiates translation of a subset of mRNAs involved in cell proliferation. The sequence is that of Eukaryotic translation initiation factor 3 subunit M from Aspergillus clavatus (strain ATCC 1007 / CBS 513.65 / DSM 816 / NCTC 3887 / NRRL 1 / QM 1276 / 107).